The following is a 437-amino-acid chain: Peptidyl-prolyl cis-trans isomerase CYP38, chloroplastic (437 aa).

The transit peptide at 1–36 (MAAAFASLPTFSVVNSSRFPRRRIGFSCSKKPLEVR) directs the protein to the chloroplast. The transit peptide at 37 to 92 (CSSGNTRYTKQRGAFTSLKECAISLALSVGLMVSVPSIALPPNAHAVANPVIPDVS) directs the protein to the thylakoid. The region spanning 245–437 (VKIKDNPNIE…LANPSYKIAG (193 aa)) is the PPIase cyclophilin-type domain.

Ubiquitous. Lower levels of expression in roots.

Its subcellular location is the plastid. The protein resides in the chloroplast thylakoid lumen. It carries out the reaction [protein]-peptidylproline (omega=180) = [protein]-peptidylproline (omega=0). Its function is as follows. Required for the assembly and stabilization of PSII, but has no PPIases activity. This Arabidopsis thaliana (Mouse-ear cress) protein is Peptidyl-prolyl cis-trans isomerase CYP38, chloroplastic (CYP38).